The primary structure comprises 422 residues: Probable tRNA pseudouridine synthase D 2 (422 aa).

The active-site Nucleophile is the Asp89. In terms of domain architecture, TRUD spans 160–371; the sequence is GAPNYFDSQR…IYSERKILSI (212 aa).

It belongs to the pseudouridine synthase TruD family.

The enzyme catalyses uridine(13) in tRNA = pseudouridine(13) in tRNA. In terms of biological role, could be responsible for synthesis of pseudouridine from uracil-13 in transfer RNAs. The polypeptide is Probable tRNA pseudouridine synthase D 2 (Methanocaldococcus jannaschii (strain ATCC 43067 / DSM 2661 / JAL-1 / JCM 10045 / NBRC 100440) (Methanococcus jannaschii)).